Reading from the N-terminus, the 326-residue chain is Beta-ketoacyl-[acyl-carrier-protein] synthase III (326 aa).

Residues Cys-112 and His-251 contribute to the active site. The tract at residues 252 to 256 (QANSR) is ACP-binding. Residue Asn-281 is part of the active site.

This sequence belongs to the thiolase-like superfamily. FabH family. Homodimer.

The protein localises to the cytoplasm. It catalyses the reaction malonyl-[ACP] + acetyl-CoA + H(+) = 3-oxobutanoyl-[ACP] + CO2 + CoA. The protein operates within lipid metabolism; fatty acid biosynthesis. Functionally, catalyzes the condensation reaction of fatty acid synthesis by the addition to an acyl acceptor of two carbons from malonyl-ACP. Catalyzes the first condensation reaction which initiates fatty acid synthesis and may therefore play a role in governing the total rate of fatty acid production. Possesses both acetoacetyl-ACP synthase and acetyl transacylase activities. Its substrate specificity determines the biosynthesis of branched-chain and/or straight-chain of fatty acids. In Clostridium botulinum (strain Okra / Type B1), this protein is Beta-ketoacyl-[acyl-carrier-protein] synthase III.